A 284-amino-acid chain; its full sequence is Bifunctional protein FolD (284 aa).

NADP(+) is bound by residues 165–167 (GAS), S190, and I231.

It belongs to the tetrahydrofolate dehydrogenase/cyclohydrolase family. Homodimer.

The catalysed reaction is (6R)-5,10-methylene-5,6,7,8-tetrahydrofolate + NADP(+) = (6R)-5,10-methenyltetrahydrofolate + NADPH. The enzyme catalyses (6R)-5,10-methenyltetrahydrofolate + H2O = (6R)-10-formyltetrahydrofolate + H(+). The protein operates within one-carbon metabolism; tetrahydrofolate interconversion. Catalyzes the oxidation of 5,10-methylenetetrahydrofolate to 5,10-methenyltetrahydrofolate and then the hydrolysis of 5,10-methenyltetrahydrofolate to 10-formyltetrahydrofolate. In Polynucleobacter necessarius subsp. necessarius (strain STIR1), this protein is Bifunctional protein FolD.